Reading from the N-terminus, the 1926-residue chain is Myosin-15 (1926 aa).

Positions 29–79 (DGKKKCWIPDGENAYIEAEVKGSEDDGTVIVETADGESLSIKEDKIQQMNP) constitute a Myosin N-terminal SH3-like domain. In terms of domain architecture, Myosin motor spans 83-770 (EMIEDMAMLT…FLGQLEAIRD (688 aa)). Lysine 127 bears the N6,N6,N6-trimethyllysine mark. Position 176–183 (176–183 (GESGAGKT)) interacts with ATP. Actin-binding stretches follow at residues 647 to 669 (LNKLMTNLKSTAPHFVRCINPNV) and 749 to 763 (RFGITKVFFKAGFLG). The 30-residue stretch at 773–802 (LSKVFTLFQARAQGKLMRIKFQKILEERDA) folds into the IQ domain. Positions 833–1926 (KSSEVGEEVA…REFGKKVQEE (1094 aa)) form a coiled coil.

Belongs to the TRAFAC class myosin-kinesin ATPase superfamily. Myosin family. Muscle myosin is a hexameric protein that consists of 2 heavy chain subunits (MHC), 2 alkali light chain subunits (MLC) and 2 regulatory light chain subunits (MLC-2).

Its subcellular location is the cytoplasm. It localises to the myofibril. Its function is as follows. Muscle contraction. The sequence is that of Myosin-15 (MYH15) from Homo sapiens (Human).